The following is a 165-amino-acid chain: S-(2-succino)cysteine N-acetyltransferase (165 aa).

Positions 3-162 (PRYRLAVERD…ITVYMKKQLR (160 aa)) constitute an N-acetyltransferase domain.

It belongs to the acetyltransferase family.

It carries out the reaction S-(2-succino)-L-cysteine + acetyl-CoA = N-acetyl-S-(2-succino)-L-cysteine + CoA + H(+). The protein operates within amino-acid biosynthesis; L-cysteine biosynthesis. Catalyzes the N-acetylation of S-(2-succino)cysteine. Is involved in a S-(2-succino)cysteine (2SC) degradation pathway that allows B.subtilis to grow on 2SC as a sole sulfur source, via its metabolization to cysteine. Moreover, 2SC is a toxic compound in B.subtilis at high exogenous concentrations, and this enzyme relieves 2SC toxicity via N-acetylation. This chain is S-(2-succino)cysteine N-acetyltransferase, found in Bacillus subtilis (strain 168).